Consider the following 130-residue polypeptide: Phosphoribosyl-AMP cyclohydrolase (130 aa).

Asp77 lines the Mg(2+) pocket. Cys78 contributes to the Zn(2+) binding site. Residues Asp79 and Asp81 each contribute to the Mg(2+) site. Zn(2+)-binding residues include Cys95 and Cys102.

It belongs to the PRA-CH family. In terms of assembly, homodimer. Mg(2+) serves as cofactor. It depends on Zn(2+) as a cofactor.

It localises to the cytoplasm. The enzyme catalyses 1-(5-phospho-beta-D-ribosyl)-5'-AMP + H2O = 1-(5-phospho-beta-D-ribosyl)-5-[(5-phospho-beta-D-ribosylamino)methylideneamino]imidazole-4-carboxamide. The protein operates within amino-acid biosynthesis; L-histidine biosynthesis; L-histidine from 5-phospho-alpha-D-ribose 1-diphosphate: step 3/9. In terms of biological role, catalyzes the hydrolysis of the adenine ring of phosphoribosyl-AMP. The sequence is that of Phosphoribosyl-AMP cyclohydrolase from Pseudomonas putida (strain W619).